The chain runs to 503 residues: Probable cytosol aminopeptidase (503 aa).

2 residues coordinate Mn(2+): Lys271 and Asp276. Residue Lys283 is part of the active site. Positions 294, 353, and 355 each coordinate Mn(2+). The active site involves Arg357.

Belongs to the peptidase M17 family. It depends on Mn(2+) as a cofactor.

The protein localises to the cytoplasm. It carries out the reaction Release of an N-terminal amino acid, Xaa-|-Yaa-, in which Xaa is preferably Leu, but may be other amino acids including Pro although not Arg or Lys, and Yaa may be Pro. Amino acid amides and methyl esters are also readily hydrolyzed, but rates on arylamides are exceedingly low.. The catalysed reaction is Release of an N-terminal amino acid, preferentially leucine, but not glutamic or aspartic acids.. Its function is as follows. Presumably involved in the processing and regular turnover of intracellular proteins. Catalyzes the removal of unsubstituted N-terminal amino acids from various peptides. In Chlorobaculum parvum (strain DSM 263 / NCIMB 8327) (Chlorobium vibrioforme subsp. thiosulfatophilum), this protein is Probable cytosol aminopeptidase.